The chain runs to 313 residues: Small glutamine-rich tetratricopeptide repeat-containing protein alpha (313 aa).

The segment at 69–97 (KELPPDLRSPQETPPSEEDSAEAERLKTE) is disordered. Residue S77 is modified to Phosphoserine. T81 is modified (phosphothreonine). S84 is modified (phosphoserine). TPR repeat units lie at residues 91–124 (AERL…NPAN), 125–158 (AVYF…DPSY), and 159–192 (SKAY…DPDN). N6-acetyllysine is present on K137. A Phosphoserine modification is found at S301. Residue T303 is modified to Phosphothreonine. A Phosphoserine modification is found at S305.

This sequence belongs to the SGT family. In terms of assembly, homodimer. Homooligomer. Interacts with DNAJC5 and DNAJC5B. Interacts (via TPR repeats) with HSP90AA1. Interacts (via Gln-rich region) with SLC2A1. Interacts with HSP90AB1. Interacts (via TPR repeats) with HSPA8/Hsc70; the interaction is direct. Interacts with BAG6 (via ubiquitin-like domain); interaction prevents interaction between BAG6 and RNF126. Forms a multiprotein complex, at least composed of DNAJB12, DNAJB14, HSPA8/Hsc70 and SGTA; interaction with DNAJB14 and HSPA8/Hsc70 is direct.

Its subcellular location is the cytoplasm. The protein resides in the nucleus. Functionally, co-chaperone that binds misfolded and hydrophobic patches-containing client proteins in the cytosol. Mediates their targeting to the endoplasmic reticulum but also regulates their sorting to the proteasome when targeting fails. Functions in tail-anchored/type II transmembrane proteins membrane insertion constituting with ASNA1 and the BAG6 complex a targeting module. Functions upstream of the BAG6 complex and ASNA1, binding more rapidly the transmembrane domain of newly synthesized proteins. It is also involved in the regulation of the endoplasmic reticulum-associated misfolded protein catabolic process via its interaction with BAG6: collaborates with the BAG6 complex to maintain hydrophobic substrates in non-ubiquitinated states. Competes with RNF126 for interaction with BAG6, preventing the ubiquitination of client proteins associated with the BAG6 complex. Binds directly to HSC70 and HSP70 and regulates their ATPase activity. This Bos taurus (Bovine) protein is Small glutamine-rich tetratricopeptide repeat-containing protein alpha (SGTA).